A 71-amino-acid chain; its full sequence is Conotoxin Ca5.1 (71 aa).

The signal sequence occupies residues 1–19 (MRCVPVFIILLLLASPAAS). Positions 20-56 (DPLEKRIQSDLIRAALEDADTKNDPRILEDIVSTALA) are excised as a propeptide.

Belongs to the conotoxin T superfamily. Contains 2 disulfide bonds that can be either 'C1-C3, C2-C4' or 'C1-C4, C2-C3', since these disulfide connectivities have been observed for conotoxins with cysteine framework V (for examples, see AC P0DQQ7 and AC P81755). Expressed by the venom duct.

It is found in the secreted. This Conus caracteristicus (Characteristic cone) protein is Conotoxin Ca5.1.